The sequence spans 403 residues: Alkaline protease 1 (403 aa).

Residues 1–21 form the signal peptide; the sequence is MQSIKRTLLLLGAILPAVLGA. The propeptide occupies 22-125; it reads PVQETRRAAE…QIYYLDGLTT (104 aa). Positions 36 to 120 constitute an Inhibitor I9 domain; sequence KYIVTFKPGI…YVEEDQIYYL (85 aa). One can recognise a Peptidase S8 domain in the interval 130–403; it reads PWGLGSISHK…PNLLAYNGNA (274 aa). Active-site charge relay system residues include D162 and H193. A glycan (N-linked (GlcNAc...) asparagine) is linked at N253. S349 functions as the Charge relay system in the catalytic mechanism.

The protein belongs to the peptidase S8 family.

The protein localises to the secreted. The enzyme catalyses Hydrolysis of proteins with broad specificity, and of Bz-Arg-OEt &gt; Ac-Tyr-OEt. Does not hydrolyze peptide amides.. Its function is as follows. Secreted alkaline protease that allows assimilation of proteinaceous substrates. This is Alkaline protease 1 (alp1) from Aspergillus flavus (strain ATCC 200026 / FGSC A1120 / IAM 13836 / NRRL 3357 / JCM 12722 / SRRC 167).